We begin with the raw amino-acid sequence, 1066 residues long: Elongation factor 3 (1066 aa).

6 HEAT repeats span residues 112–149 (FIFE…VMSP), 151–188 (AAQQ…ACPE), 192–229 (ALMP…LISN), 231–268 (DIER…EVDS), 269–306 (ATLA…LVDN), and 312–353 (PFLG…VTGD). Residue Thr418 coordinates ADP. 2 ABC transporter domains span residues 454-672 (EEGE…YAEL) and 699-1015 (IKMK…KKEE). Asn735, Glu944, Asn947, and His973 together coordinate ADP. The tract at residues 997–1066 (GHDWTESNSK…YDSADELEDL (70 aa)) is disordered. Positions 1042 to 1054 (RKAKKDRMARKKA) are enriched in basic residues.

This sequence belongs to the ABC transporter superfamily. ABCF family. EF3 subfamily.

Its subcellular location is the cytoplasm. It is found in the cytosol. It catalyses the reaction ATP + H2O = ADP + phosphate + H(+). Its pathway is protein biosynthesis; polypeptide chain elongation. Ribosome-dependent ATPase that functions in cytoplasmic translation elongation. Required for the ATP-dependent release of deacylated tRNA from the ribosomal E-site during protein biosynthesis. Stimulates the eEF1A-dependent binding of aminoacyl-tRNA to the ribosomal A-site, which has reduced affinity for tRNA as long as the E-site is occupied. Assists translation termination by stimulating the release of nascent protein from the ribosome by release factors. This is Elongation factor 3 from Mycosarcoma maydis (Corn smut fungus).